A 457-amino-acid polypeptide reads, in one-letter code: Omega-hydroxypalmitate O-feruloyl transferase (457 aa).

Residues His-184 and Asp-404 each act as proton acceptor in the active site.

The protein belongs to the plant acyltransferase family. As to expression, expressed in roots, seedlings, leaves, stems, flowers and siliques. Detected at the protein level in roots and in seed coats.

It carries out the reaction 16-hydroxyhexadecanoate + (E)-feruloyl-CoA = 16-feruloyloxyhexadecanoate + CoA. Involved in the synthesis of aromatics of the suberin polymer. Specifically affects the accumulation of the ferulate constituent of suberin in roots and seeds, but has no effect on the content of p-coumarate or sinapate. The polypeptide is Omega-hydroxypalmitate O-feruloyl transferase (HHT1) (Arabidopsis thaliana (Mouse-ear cress)).